The chain runs to 165 residues: AP-3 complex subunit sigma (165 aa).

It belongs to the adaptor complexes small subunit family. As to quaternary structure, adaptor protein complex 3 (AP-3) is a heterotetramer composed of 2 large adaptins (apl5 and apl6), a medium adaptin (apm3) and a small adaptin (aps3).

It localises to the golgi apparatus. The protein resides in the cytoplasmic vesicle membrane. Functionally, part of the AP-3 complex, an adaptor-related complex which is not clathrin-associated. The complex is associated with the Golgi region as well as more peripheral structures. It facilitates the budding of vesicles from the Golgi membrane and may be directly involved in trafficking to the vacuole. The protein is AP-3 complex subunit sigma (aps3) of Schizosaccharomyces pombe (strain 972 / ATCC 24843) (Fission yeast).